Here is a 359-residue protein sequence, read N- to C-terminus: SAGA complex subunit Spt7 (359 aa).

As to quaternary structure, component of the Spt-Ada-Gcn5 acetyltransferase (SAGA) complex consisting of wda/Taf5L, Saf6, Taf9, Taf10b, Taf12, Ada1, Spt3, Spt7, Spt20, Sf3b3, Sf3b5, Nipped-A/Tra1, a histone acetyltransferase (HAT) module made up of Gcn5, Ada2b (Isoform B), Ada3 and Sgf29, and a deubiquitinase (DUB) module made up of not/nonstop, Sgf11 and e(y)2 tethered to SAGA by Atxn7. Interacts with Ada2b; the interaction is direct.

The protein resides in the nucleus. Functionally, component of the transcription regulatory complex SAGA, a multiprotein complex that activates transcription by remodeling chromatin and mediating histone acetylation and deubiquitination. The SAGA complex predominantly acetylates histone H3. The sequence is that of SAGA complex subunit Spt7 from Drosophila melanogaster (Fruit fly).